The primary structure comprises 248 residues: 2,3-bisphosphoglycerate-dependent phosphoglycerate mutase (248 aa).

Substrate is bound by residues 8 to 15, 21 to 22, R60, 87 to 90, K98, 114 to 115, and 183 to 184; these read RHGESTWN, TG, ERHY, RR, and GN. Catalysis depends on H9, which acts as the Tele-phosphohistidine intermediate. E87 acts as the Proton donor/acceptor in catalysis.

This sequence belongs to the phosphoglycerate mutase family. BPG-dependent PGAM subfamily. Homodimer.

It carries out the reaction (2R)-2-phosphoglycerate = (2R)-3-phosphoglycerate. It participates in carbohydrate degradation; glycolysis; pyruvate from D-glyceraldehyde 3-phosphate: step 3/5. Functionally, catalyzes the interconversion of 2-phosphoglycerate and 3-phosphoglycerate. In Burkholderia ambifaria (strain ATCC BAA-244 / DSM 16087 / CCUG 44356 / LMG 19182 / AMMD) (Burkholderia cepacia (strain AMMD)), this protein is 2,3-bisphosphoglycerate-dependent phosphoglycerate mutase.